A 220-amino-acid chain; its full sequence is Probable GTP-binding protein EngB (220 aa).

Residues 26–200 (EGIEIAFAGR…RAKLDEWYAP (175 aa)) form the EngB-type G domain. Residues 34 to 41 (GRSNTGKS), 61 to 65 (GRTQL), 79 to 82 (DLPG), 146 to 149 (TKAD), and 179 to 181 (FSS) each bind GTP. Mg(2+)-binding residues include Ser-41 and Thr-63.

This sequence belongs to the TRAFAC class TrmE-Era-EngA-EngB-Septin-like GTPase superfamily. EngB GTPase family. The cofactor is Mg(2+).

In terms of biological role, necessary for normal cell division and for the maintenance of normal septation. The protein is Probable GTP-binding protein EngB of Vibrio cholerae serotype O1 (strain ATCC 39541 / Classical Ogawa 395 / O395).